Reading from the N-terminus, the 388-residue chain is Large ribosomal subunit protein uL3B (388 aa).

Basic and acidic residues predominate over residues 1–10 (MSHCKFEQPR). The interval 1–34 (MSHCKFEQPRHGSLGFLPRKRASRQRGKVKAFPK) is disordered. Positions 18–31 (PRKRASRQRGKVKA) are enriched in basic residues.

It belongs to the universal ribosomal protein uL3 family. Component of the large ribosomal subunit (LSU). Mature yeast ribosomes consist of a small (40S) and a large (60S) subunit. The 40S small subunit contains 1 molecule of ribosomal RNA (18S rRNA) and at least 33 different proteins. The large 60S subunit contains 3 rRNA molecules (25S, 5.8S and 5S rRNA) and at least 46 different proteins. uL3 forms together with ES39L one of the contact sites for the signal recognition particle that targets ribosomes to the endoplasmic reticulum membrane.

The protein resides in the cytoplasm. Its function is as follows. Component of the ribosome, a large ribonucleoprotein complex responsible for the synthesis of proteins in the cell. The small ribosomal subunit (SSU) binds messenger RNAs (mRNAs) and translates the encoded message by selecting cognate aminoacyl-transfer RNA (tRNA) molecules. The large subunit (LSU) contains the ribosomal catalytic site termed the peptidyl transferase center (PTC), which catalyzes the formation of peptide bonds, thereby polymerizing the amino acids delivered by tRNAs into a polypeptide chain. The nascent polypeptides leave the ribosome through a tunnel in the LSU and interact with protein factors that function in enzymatic processing, targeting, and the membrane insertion of nascent chains at the exit of the ribosomal tunnel. uL3 plays a role in coordinating processes of accommodating the aminoacyl-tRNA in the PTC. In Schizosaccharomyces pombe (strain 972 / ATCC 24843) (Fission yeast), this protein is Large ribosomal subunit protein uL3B (rpl302).